The following is a 130-amino-acid chain: Histone H2A.2 (130 aa).

N6-acetyllysine is present on residues Lys4 and Lys6. The residue at position 104 (Gln104) is an N5-methylglutamine. A Glycyl lysine isopeptide (Lys-Gly) (interchain with G-Cter in SUMO) cross-link involves residue Lys125. Ser127 is subject to Phosphoserine. The short motif at 127 to 128 is the [ST]-Q motif element; the sequence is SQ.

It belongs to the histone H2A family. As to quaternary structure, the nucleosome is a histone octamer containing two molecules each of H2A, H2B, H3 and H4 assembled in one H3-H4 heterotetramer and two H2A-H2B heterodimers. The octamer wraps approximately 147 bp of DNA. Phosphorylated to form H2AS128ph (gamma-H2A) in response to DNA double-strand breaks (DSBs) generated by exogenous genotoxic agents and by stalled replication forks. Phosphorylation is dependent on the DNA damage checkpoint kinases MEC1/ATR and TEL1/ATM, spreads on either side of a detected DSB site and may mark the surrounding chromatin for recruitment of proteins required for DNA damage signaling and repair. Gamma-H2A is removed from the DNA prior to the strand invasion-primer extension step of the repair process and subsequently dephosphorylated. Dephosphorylation is necessary for efficient recovery from the DNA damage checkpoint. In terms of processing, acetylated by ESA1 to form H2AK4ac and H2AK7ac.

Its subcellular location is the nucleus. It localises to the chromosome. In terms of biological role, core component of nucleosome which plays a central role in DNA double strand break (DSB) repair. Nucleosomes wrap and compact DNA into chromatin, limiting DNA accessibility to the cellular machineries which require DNA as a template. Histones thereby play a central role in transcription regulation, DNA repair, DNA replication and chromosomal stability. DNA accessibility is regulated via a complex set of post-translational modifications of histones, also called histone code, and nucleosome remodeling. The sequence is that of Histone H2A.2 (HTA2) from Meyerozyma guilliermondii (strain ATCC 6260 / CBS 566 / DSM 6381 / JCM 1539 / NBRC 10279 / NRRL Y-324) (Yeast).